Reading from the N-terminus, the 761-residue chain is uncharacterized protein (761 aa).

TPR repeat units lie at residues 35–68 (EEGK…SLNS), 69–102 (AQGL…SDVD), 103–136 (DALY…NPNK), 137–170 (VEIL…KPDF), 172–203 (EAEE…KNPN), 204–237 (EEVY…FPHD), 351–384 (LGVL…NPSA), and 419–452 (ASAG…VKEE). A protein sulfotransferase-like region spans residues 487–761 (KRPIFVLGMP…PKGLVGYTVG (275 aa)).

In the C-terminal section; belongs to the protein sulfotransferase family.

This is an uncharacterized protein from Aquifex aeolicus (strain VF5).